We begin with the raw amino-acid sequence, 887 residues long: Tiger protein O1 (887 aa).

Positions 1–21 are cleaved as a signal peptide; sequence MEKKLLIIVIVFLFSTIQVFC. The Extracellular segment spans residues 22 to 845; sequence RIDDKTFVIS…SLSKKSIILL (824 aa). 24 N-linked (GlcNAc...) asparagine glycosylation sites follow: Asn-32, Asn-70, Asn-186, Asn-207, Asn-219, Asn-259, Asn-297, Asn-314, Asn-325, Asn-338, Asn-354, Asn-393, Asn-431, Asn-588, Asn-629, Asn-652, Asn-687, Asn-710, Asn-720, Asn-730, Asn-775, Asn-788, Asn-811, and Asn-816. One can recognise an IPT/TIG 1 domain in the interval 277–365; it reads NSVPYSKGGL…TNENKLLFNY (89 aa). The region spanning 710–767 is the IPT/TIG 2 domain; that stretch reads NTSSINVNGGNLTIYGKNFYNVSNIKVEVDNQLKCNKIEFINLNSLTCFLPPFIETLF. The segment at 811 to 835 is disordered; the sequence is NDTSENSTNDILNHEKNNNNQKDGS. A helical membrane pass occupies residues 846–866; that stretch reads SILLPSFIILIVSLAIVILVI. Residues 867–887 are Cytoplasmic-facing; the sequence is KRNKTKHSKNMSSKEKELMKQ.

It is found in the membrane. In Dictyostelium discoideum (Social amoeba), this protein is Tiger protein O1 (tgrO1).